The chain runs to 264 residues: Thymidylate synthase (264 aa).

Arginine 21 contacts dUMP. Position 51 (histidine 51) interacts with (6R)-5,10-methylene-5,6,7,8-tetrahydrofolate. 126–127 (RR) contacts dUMP. Cysteine 146 acts as the Nucleophile in catalysis. DUMP-binding positions include 166–169 (RSAD), asparagine 177, and 207–209 (HIY). Aspartate 169 lines the (6R)-5,10-methylene-5,6,7,8-tetrahydrofolate pocket. Alanine 263 is a binding site for (6R)-5,10-methylene-5,6,7,8-tetrahydrofolate.

It belongs to the thymidylate synthase family. Bacterial-type ThyA subfamily. In terms of assembly, homodimer.

It localises to the cytoplasm. The catalysed reaction is dUMP + (6R)-5,10-methylene-5,6,7,8-tetrahydrofolate = 7,8-dihydrofolate + dTMP. It participates in pyrimidine metabolism; dTTP biosynthesis. In terms of biological role, catalyzes the reductive methylation of 2'-deoxyuridine-5'-monophosphate (dUMP) to 2'-deoxythymidine-5'-monophosphate (dTMP) while utilizing 5,10-methylenetetrahydrofolate (mTHF) as the methyl donor and reductant in the reaction, yielding dihydrofolate (DHF) as a by-product. This enzymatic reaction provides an intracellular de novo source of dTMP, an essential precursor for DNA biosynthesis. The sequence is that of Thymidylate synthase from Vesicomyosocius okutanii subsp. Calyptogena okutanii (strain HA).